Consider the following 582-residue polypeptide: Phosphoglucomutase, cytoplasmic (582 aa).

The alpha-D-glucose 1,6-bisphosphate site is built by arginine 25 and serine 124. Catalysis depends on serine 124, which acts as the Phosphoserine intermediate. The Mg(2+) site is built by serine 124, aspartate 299, aspartate 301, and aspartate 303. Serine 124 carries the post-translational modification Phosphoserine. Positions 303, 304, 367, 386, 388, and 399 each coordinate alpha-D-glucose 1,6-bisphosphate.

Belongs to the phosphohexose mutase family. As to quaternary structure, monomer. Mg(2+) serves as cofactor.

The protein resides in the cytoplasm. It catalyses the reaction alpha-D-glucose 1-phosphate = alpha-D-glucose 6-phosphate. It carries out the reaction O-phospho-L-seryl-[protein] + alpha-D-glucose 1-phosphate = alpha-D-glucose 1,6-bisphosphate + L-seryl-[protein]. The enzyme catalyses alpha-D-glucose 1,6-bisphosphate + L-seryl-[protein] = O-phospho-L-seryl-[protein] + alpha-D-glucose 6-phosphate. Functionally, catalyzes the reversible isomerization of alpha-D-glucose 1-phosphate to alpha-D-glucose 6-phosphate. The mechanism proceeds via the intermediate compound alpha-D-glucose 1,6-bisphosphate. This enzyme participates in both the breakdown and synthesis of glucose. This chain is Phosphoglucomutase, cytoplasmic (PGM1), found in Populus tremula (European aspen).